The following is a 426-amino-acid chain: Gamma-glutamyl phosphate reductase (426 aa).

Belongs to the gamma-glutamyl phosphate reductase family.

The protein localises to the cytoplasm. The catalysed reaction is L-glutamate 5-semialdehyde + phosphate + NADP(+) = L-glutamyl 5-phosphate + NADPH + H(+). It participates in amino-acid biosynthesis; L-proline biosynthesis; L-glutamate 5-semialdehyde from L-glutamate: step 2/2. Functionally, catalyzes the NADPH-dependent reduction of L-glutamate 5-phosphate into L-glutamate 5-semialdehyde and phosphate. The product spontaneously undergoes cyclization to form 1-pyrroline-5-carboxylate. The chain is Gamma-glutamyl phosphate reductase from Ralstonia nicotianae (strain ATCC BAA-1114 / GMI1000) (Ralstonia solanacearum).